We begin with the raw amino-acid sequence, 514 residues long: MHPSRMALIRPPLFSSYRFGSLLMEPSSTPGPARNARRSNRRMRHPDKDVDKRVRELDAERDPLSLPEEIVSEVTRAGGRVGIPAKDQSPKQALNINDLQKLEHDELLALAETEGLQEIAALPRQELVFRLLKARMSANGLMYGEGTLEILPDGFGFLRSAQYHYLSCPDDIYVSPSQIRRFGLHTGSHVAGQIRPPKENERYFALLRIEAINHADPMQRQRQKPFDDLTPLHPRTRIVTEHDSQELSTRVVDLFTPIGFGQRGLIVSPPRAGKTMLMQSLARGVLNNYPDAYVVVLLIDERPEEVTDMEREIQSPQCEVISSTFDEPPARHIQVAQMVVEKAKRMVESGTDVVIFLDSITRLARAFNSDSDSATGKLLTGGLDAGAMQKPKSIFGSARKVEEGGSLTILATALVDTGSRMDDVIFEEFKGTGNLEIVLDQDLVARRVWPAIDLTRSGTRREEMLLDQEEHRRIETLRRDLAEHSPVDSMTELIKRMRKTQNNAEFLMSVHPQD.

A disordered region spans residues 25–52 (EPSSTPGPARNARRSNRRMRHPDKDVDK). Over residues 35–45 (NARRSNRRMRH) the composition is skewed to basic residues. Residues 141–216 (LMYGEGTLEI…LRIEAINHAD (76 aa)) form the Rho RNA-BD domain. ATP-binding positions include 259-264 (GFGQRG), 271-276 (RAGKTM), and Arg302.

The protein belongs to the Rho family. Homohexamer. The homohexamer assembles into an open ring structure.

Facilitates transcription termination by a mechanism that involves Rho binding to the nascent RNA, activation of Rho's RNA-dependent ATPase activity, and release of the mRNA from the DNA template. The protein is Transcription termination factor Rho of Rhodopirellula baltica (strain DSM 10527 / NCIMB 13988 / SH1).